Reading from the N-terminus, the 346-residue chain is Serpentine receptor class gamma-20 (346 aa).

7 consecutive transmembrane segments (helical) span residues V27–L47, F69–L89, P106–F128, I157–L177, I212–L232, T254–I274, and L279–L299.

This sequence belongs to the nematode receptor-like protein srg family.

The protein localises to the membrane. The protein is Serpentine receptor class gamma-20 (srg-20) of Caenorhabditis elegans.